We begin with the raw amino-acid sequence, 229 residues long: Demethylmenaquinone methyltransferase (229 aa).

Residues threonine 62, aspartate 80, 100 to 101, and serine 117 contribute to the S-adenosyl-L-methionine site; that span reads DG.

This sequence belongs to the class I-like SAM-binding methyltransferase superfamily. MenG/UbiE family.

The enzyme catalyses a 2-demethylmenaquinol + S-adenosyl-L-methionine = a menaquinol + S-adenosyl-L-homocysteine + H(+). It participates in quinol/quinone metabolism; menaquinone biosynthesis; menaquinol from 1,4-dihydroxy-2-naphthoate: step 2/2. In terms of biological role, methyltransferase required for the conversion of demethylmenaquinol (DMKH2) to menaquinol (MKH2). The chain is Demethylmenaquinone methyltransferase from Corynebacterium kroppenstedtii (strain DSM 44385 / JCM 11950 / CIP 105744 / CCUG 35717).